The primary structure comprises 378 residues: Mas-related G-protein coupled receptor MRG (378 aa).

The Extracellular portion of the chain corresponds to 1-77 (MVWGKICWFS…VGQQALPLNI (77 aa)). N-linked (GlcNAc...) asparagine glycans are attached at residues asparagine 54 and asparagine 57. A helical transmembrane segment spans residues 78 to 101 (IAPKAVLVSLCGVLLNGTVFWLLC). Over 102–109 (CGATNPYM) the chain is Cytoplasmic. The chain crosses the membrane as a helical span at residues 110–136 (VYILHLVAADVIYLCCSAVGFLQVTLL). The Extracellular portion of the chain corresponds to 137 to 154 (TYHGVVFFIPDFLAILSP). The chain crosses the membrane as a helical span at residues 155–169 (FSFEVCLCLLVAIST). The Cytoplasmic portion of the chain corresponds to 170–191 (ERCVCVLFPIWYRCHRPKYTSN). A helical transmembrane segment spans residues 192-207 (VVCTLIWGLPFCINIV). The Extracellular segment spans residues 208 to 221 (KSLFLTYWKHVKAC). Residues 222-248 (VIFLKLSGLFHAILSLVMCVSSLTLLI) traverse the membrane as a helical segment. Topologically, residues 249 to 264 (RFLCCSQQQKATRVYA) are cytoplasmic. A helical membrane pass occupies residues 265 to 286 (VVQISAPMFLLWALPLSVAPLI). At 287–297 (TDFKMFVTTSY) the chain is on the extracellular side. The helical transmembrane segment at 298 to 317 (LISLFLIINSSANPIIYFFV) threads the bilayer. The Cytoplasmic portion of the chain corresponds to 318–378 (GSLRKKRLKE…PREHRVDVET (61 aa)). Residues 344–378 (GRNKKAAGIDPMEQPHSTQHVENLLPREHRVDVET) form a disordered region. Over residues 368-378 (LPREHRVDVET) the composition is skewed to basic and acidic residues.

This sequence belongs to the G-protein coupled receptor 1 family. Mas subfamily.

The protein resides in the cell membrane. The sequence is that of Mas-related G-protein coupled receptor MRG (MAS1L) from Homo sapiens (Human).